The sequence spans 78 residues: Conotoxin TsMSGL-13 (78 aa).

The N-terminal stretch at 1–24 (MSGLGIMVLTLLLFMFMATSHQDA) is a signal peptide. Positions 25-44 (GEKQATQRDAINVRRRRSIT) are excised as a propeptide. 3 cysteine pairs are disulfide-bonded: C51–C63, C55–C72, and C62–C76. F77 is modified (phenylalanine amide).

Belongs to the conotoxin O3 superfamily. Expressed by the venom duct.

It is found in the secreted. In Conus tessulatus (Tessellate cone), this protein is Conotoxin TsMSGL-13.